The chain runs to 421 residues: MKLLVVGSGGREHAIAKKLLASKGVDQVFVAPGNDGMTLDGLDLVNIVVSEHSRLIAFAKENEISWAFIGPDDALAAGIVDDFNTAGLRAFGPTKAAAELEWSKDFAKEIMVKYNVPTAAYGTFSDFEKAKAYIEEQGAPIVVKADGLALGKGVVVAETVEQAVEAAQEMLLDNKFGDSGARVVIEEFLDGEEFSLFAFVNGDKFYIMPTAQDHKRAFDGDKGPNTGGMGAYAPVPHLPQSVVDTAVEMIVRPVLEGMVAEGRPYLGVLYVGLILTADGPKVIEFNSRFGDPETQIILPRLTSDFAQNIDDIMMGIEPYITWQKDGVTLGVVVASEGYPFDYEKGVPLPEKTDGDIITYYAGVKFSENSELLLSNGGRVYMLVTTEDSVKAGQDKIYTQLAQQDPTGLFYRNDIGSKAIRE.

The ATP-grasp domain maps to 108–314; sequence KEIMVKYNVP…FAQNIDDIMM (207 aa). Residue 134-195 participates in ATP binding; the sequence is IEEQGAPIVV…EEFLDGEEFS (62 aa). Mg(2+)-binding residues include Glu-284 and Asn-286.

Belongs to the GARS family. The cofactor is Mg(2+). Mn(2+) serves as cofactor.

The enzyme catalyses 5-phospho-beta-D-ribosylamine + glycine + ATP = N(1)-(5-phospho-beta-D-ribosyl)glycinamide + ADP + phosphate + H(+). It functions in the pathway purine metabolism; IMP biosynthesis via de novo pathway; N(1)-(5-phospho-D-ribosyl)glycinamide from 5-phospho-alpha-D-ribose 1-diphosphate: step 2/2. The sequence is that of Phosphoribosylamine--glycine ligase from Streptococcus pyogenes serotype M3 (strain SSI-1).